A 290-amino-acid polypeptide reads, in one-letter code: Barley B recombinant-like protein C (290 aa).

Disordered regions lie at residues 60 to 90 and 102 to 183; these read PHHH…YGMM and QPEP…RKNI. A compositionally biased stretch (pro residues) spans 104-116; it reads EPQPQLQHPPSPP. Over residues 138-158 the composition is skewed to basic residues; it reads PPKKRQQGRQPKVLRPKKPKK.

Belongs to the BBR/BPC family.

Its subcellular location is the nucleus. Its function is as follows. Transcriptional regulator that specifically binds to GA-rich elements (GAGA-repeats) present in regulatory sequences of genes involved in developmental processes. The protein is Barley B recombinant-like protein C of Oryza sativa subsp. japonica (Rice).